We begin with the raw amino-acid sequence, 164 residues long: Transcription antitermination protein NusB (164 aa).

Residues 144 to 164 (KNGRGLIDHTPPRAAKTDAKS) are disordered. The span at 149–164 (LIDHTPPRAAKTDAKS) shows a compositional bias: basic and acidic residues.

Belongs to the NusB family.

In terms of biological role, involved in transcription antitermination. Required for transcription of ribosomal RNA (rRNA) genes. Binds specifically to the boxA antiterminator sequence of the ribosomal RNA (rrn) operons. The sequence is that of Transcription antitermination protein NusB from Chlorobium phaeovibrioides (strain DSM 265 / 1930) (Prosthecochloris vibrioformis (strain DSM 265)).